We begin with the raw amino-acid sequence, 245 residues long: NAD(P)H-quinone oxidoreductase subunit K (245 aa).

The [4Fe-4S] cluster site is built by Cys58, Cys59, Cys123, and Cys154. The tract at residues 210 to 245 (SDTRSAPPKELAEAIGMPIPPALLTEKAQKEEQTRG) is disordered. The segment covering 236 to 245 (KAQKEEQTRG) has biased composition (basic and acidic residues).

This sequence belongs to the complex I 20 kDa subunit family. In terms of assembly, NDH-1 can be composed of about 15 different subunits; different subcomplexes with different compositions have been identified which probably have different functions. The cofactor is [4Fe-4S] cluster.

The protein localises to the cellular thylakoid membrane. The catalysed reaction is a plastoquinone + NADH + (n+1) H(+)(in) = a plastoquinol + NAD(+) + n H(+)(out). The enzyme catalyses a plastoquinone + NADPH + (n+1) H(+)(in) = a plastoquinol + NADP(+) + n H(+)(out). NDH-1 shuttles electrons from an unknown electron donor, via FMN and iron-sulfur (Fe-S) centers, to quinones in the respiratory and/or the photosynthetic chain. The immediate electron acceptor for the enzyme in this species is believed to be plastoquinone. Couples the redox reaction to proton translocation, and thus conserves the redox energy in a proton gradient. Cyanobacterial NDH-1 also plays a role in inorganic carbon-concentration. The chain is NAD(P)H-quinone oxidoreductase subunit K from Nostoc punctiforme (strain ATCC 29133 / PCC 73102).